The chain runs to 91 residues: Proline, histidine and glycine-rich protein 1 (91 aa).

Residues 1 to 91 (MHPGGKGHCG…HCGPHPGPHH (91 aa)) are disordered. Gly residues-rich tracts occupy residues 33–42 (HPGHGPGHCP), 49–63 (GHGG…GHCP), and 70–82 (GHGG…GPGH).

The protein is Proline, histidine and glycine-rich protein 1 (Phgr1) of Mus musculus (Mouse).